We begin with the raw amino-acid sequence, 404 residues long: Argininosuccinate synthase (404 aa).

ATP contacts are provided by residues 12–20 (AYSGGLDTS) and Ala39. Residues Tyr91 and Ser96 each contribute to the L-citrulline site. Gly121 contacts ATP. Residues Thr123, Asn127, and Asp128 each contribute to the L-aspartate site. Asn127 lines the L-citrulline pocket. L-citrulline-binding residues include Arg131, Ser180, Ser189, Glu265, and Tyr277.

This sequence belongs to the argininosuccinate synthase family. Type 1 subfamily. In terms of assembly, homotetramer.

The protein resides in the cytoplasm. It catalyses the reaction L-citrulline + L-aspartate + ATP = 2-(N(omega)-L-arginino)succinate + AMP + diphosphate + H(+). Its pathway is amino-acid biosynthesis; L-arginine biosynthesis; L-arginine from L-ornithine and carbamoyl phosphate: step 2/3. This chain is Argininosuccinate synthase, found in Vibrio campbellii (strain ATCC BAA-1116).